Here is a 576-residue protein sequence, read N- to C-terminus: Interleukin-1 receptor type 1 (576 aa).

An N-terminal signal peptide occupies residues 1–19; it reads MENMKVLLGLICLMVPLLS. The Extracellular portion of the chain corresponds to 20–338; sequence LEIDVCTEYP…QLIYPVPDFK (319 aa). 3 disulfides stabilise this stretch: C25/C107, C46/C99, and C145/C199. Ig-like C2-type domains are found at residues 25–115, 121–213, and 229–329; these read CTEY…VTVT, PGLC…YPVT, and PVIL…AHVQ. N-linked (GlcNAc...) asparagine glycosylation is found at N63, N103, N174, N236, N252, N266, and N300. C251 and C315 are joined by a disulfide. Residues 339 to 359 form a helical membrane-spanning segment; the sequence is NYLIGGFIILTATIVCCVCIY. The Cytoplasmic segment spans residues 360-576; the sequence is KVFKVDIVLW…LPAATHLPLG (217 aa). A TIR domain is found at 386–541; sequence KTYDAYILYP…RFWKNLRYQM (156 aa). E473 is a catalytic residue. At Y499 the chain carries Phosphotyrosine. T556 is modified (phosphothreonine; by PKC).

This sequence belongs to the interleukin-1 receptor family. The interleukin-1 receptor complex is a heterodimer of IL1R1 and IL1RAP. Interacts with PIK3R1. Interacts with IL1A. Post-translationally, a soluble form (sIL1R1) is probably produced by proteolytic cleavage at the cell surface (shedding). In terms of processing, rapidly phosphorylated on Tyr-499 in response to IL-1, which creates a SH2 binding site for the PI 3-kinase regulatory subunit PIK3R1. Isoform 2 is expressed in various brain tissues.

It is found in the membrane. It localises to the cell membrane. The protein localises to the secreted. It catalyses the reaction NAD(+) + H2O = ADP-D-ribose + nicotinamide + H(+). In terms of biological role, receptor for IL1A, IL1B and IL1RN. After binding to interleukin-1 associates with the coreceptor IL1RAP to form the high affinity interleukin-1 receptor complex which mediates interleukin-1-dependent activation of NF-kappa-B, MAPK and other pathways. Signaling involves the recruitment of adapter molecules such as TOLLIP, MYD88, and IRAK1 or IRAK2 via the respective TIR domains of the receptor/coreceptor subunits. Binds ligands with comparable affinity and binding of antagonist IL1RN prevents association with IL1RAP to form a signaling complex. Involved in IL1B-mediated costimulation of IFNG production from T-helper 1 (Th1) cells. Unable to mediate canonical IL-1 signaling. Cooperates with IL1RAP isoform 3 to mediate IL1B-induced neuronal activity including IL1B-potentiated NMDA-induced calcium influx mediated by Akt kinase activation. This chain is Interleukin-1 receptor type 1 (Il1r1), found in Mus musculus (Mouse).